A 144-amino-acid chain; its full sequence is Large ribosomal subunit protein uL11 (144 aa).

It belongs to the universal ribosomal protein uL11 family. As to quaternary structure, part of the ribosomal stalk of the 50S ribosomal subunit. Interacts with L10 and the large rRNA to form the base of the stalk. L10 forms an elongated spine to which L12 dimers bind in a sequential fashion forming a multimeric L10(L12)X complex. In terms of processing, one or more lysine residues are methylated.

Forms part of the ribosomal stalk which helps the ribosome interact with GTP-bound translation factors. In Polaromonas naphthalenivorans (strain CJ2), this protein is Large ribosomal subunit protein uL11.